The chain runs to 129 residues: RxLR effector protein PexRD43 (129 aa).

The first 16 residues, 1–16 (MRLAMILLSIPLFVSG), serve as a signal peptide directing secretion. The short motif at 44-56 (RSLRTSGEANEER) is the RxLR-dEER element.

Belongs to the RxLR effector family.

The protein localises to the secreted. The protein resides in the host cytoplasm. It is found in the host nucleus. Effector that enhances P.infestans colonization of Nicotiana benthamiana leaves. In Phytophthora infestans (strain T30-4) (Potato late blight agent), this protein is RxLR effector protein PexRD43.